Here is a 329-residue protein sequence, read N- to C-terminus: PTS-dependent dihydroxyacetone kinase 1, dihydroxyacetone-binding subunit DhaK (329 aa).

Residues 7–329 (GTDQVVEQMV…LKLPVDTIAW (323 aa)) enclose the DhaK domain. Residues 53-56 (GSGH), lysine 104, and aspartate 109 contribute to the dihydroxyacetone site. The active-site Proton acceptor is histidine 56. Catalysis depends on histidine 218, which acts as the Tele-hemiaminal-histidine intermediate.

In terms of assembly, homodimer. The dihydroxyacetone kinase complex is composed of a homodimer of DhaM, a homodimer of DhaK and the subunit DhaL.

It is found in the cytoplasm. The catalysed reaction is dihydroxyacetone + phosphoenolpyruvate = dihydroxyacetone phosphate + pyruvate. The protein operates within polyol metabolism; glycerol degradation. Dihydroxyacetone binding subunit of the dihydroxyacetone kinase, which is responsible for the phosphoenolpyruvate (PEP)-dependent phosphorylation of dihydroxyacetone via a phosphoryl group transfer from DhaL-ATP. The sequence is that of PTS-dependent dihydroxyacetone kinase 1, dihydroxyacetone-binding subunit DhaK from Listeria innocua serovar 6a (strain ATCC BAA-680 / CLIP 11262).